Here is a 247-residue protein sequence, read N- to C-terminus: Ribonuclease 3 (247 aa).

The RNase III domain occupies 23–149 (HADLLERLGV…LLGAIFRQHG (127 aa)). A Mg(2+)-binding site is contributed by glutamate 62. Aspartate 66 is a catalytic residue. Mg(2+) is bound by residues aspartate 135 and glutamate 138. Glutamate 138 is an active-site residue. The DRBM domain occupies 176–244 (DWKTTLQEEL…ARQAFLKLRE (69 aa)).

This sequence belongs to the ribonuclease III family. In terms of assembly, homodimer. Requires Mg(2+) as cofactor.

It localises to the cytoplasm. The enzyme catalyses Endonucleolytic cleavage to 5'-phosphomonoester.. Functionally, digests double-stranded RNA. Involved in the processing of primary rRNA transcript to yield the immediate precursors to the large and small rRNAs (23S and 16S). Processes some mRNAs, and tRNAs when they are encoded in the rRNA operon. Processes pre-crRNA and tracrRNA of type II CRISPR loci if present in the organism. The polypeptide is Ribonuclease 3 (Corynebacterium efficiens (strain DSM 44549 / YS-314 / AJ 12310 / JCM 11189 / NBRC 100395)).